A 20-amino-acid chain; its full sequence is Phospholipase A2 II-5b (20 aa).

The protein belongs to the phospholipase A2 family. Group I subfamily. Requires Ca(2+) as cofactor. As to expression, expressed by the venom gland.

Its subcellular location is the secreted. It carries out the reaction a 1,2-diacyl-sn-glycero-3-phosphocholine + H2O = a 1-acyl-sn-glycero-3-phosphocholine + a fatty acid + H(+). In terms of biological role, snake venom phospholipase A2 (PLA2) that exhibits weak enzymatic activity. PLA2 catalyzes the calcium-dependent hydrolysis of the 2-acyl groups in 3-sn-phosphoglycerides. In Notechis scutatus scutatus (Mainland tiger snake), this protein is Phospholipase A2 II-5b.